The primary structure comprises 474 residues: ATP synthase subunit beta 1 (474 aa).

157–164 (GGAGVGKT) contributes to the ATP binding site.

The protein belongs to the ATPase alpha/beta chains family. As to quaternary structure, F-type ATPases have 2 components, CF(1) - the catalytic core - and CF(0) - the membrane proton channel. CF(1) has five subunits: alpha(3), beta(3), gamma(1), delta(1), epsilon(1). CF(0) has three main subunits: a(1), b(2) and c(9-12). The alpha and beta chains form an alternating ring which encloses part of the gamma chain. CF(1) is attached to CF(0) by a central stalk formed by the gamma and epsilon chains, while a peripheral stalk is formed by the delta and b chains.

Its subcellular location is the cell inner membrane. It catalyses the reaction ATP + H2O + 4 H(+)(in) = ADP + phosphate + 5 H(+)(out). Functionally, produces ATP from ADP in the presence of a proton gradient across the membrane. The catalytic sites are hosted primarily by the beta subunits. The protein is ATP synthase subunit beta 1 of Polaromonas naphthalenivorans (strain CJ2).